A 145-amino-acid polypeptide reads, in one-letter code: Cystatin-F (145 aa).

Residues 1 to 19 form the signal peptide; it reads MRAAGTLLAFCCLVLSTTG. N-linked (GlcNAc...) asparagine glycosylation occurs at Asn62. The Secondary area of contact signature appears at 81 to 85; the sequence is QIVKG. Cys99 and Cys110 are disulfide-bonded. Asn115 carries an N-linked (GlcNAc...) asparagine glycan. A disulfide bond links Cys124 and Cys144.

Belongs to the cystatin family. In terms of assembly, homodimer; disulfide-linked. In terms of tissue distribution, primarily expressed in peripheral blood cells and spleen.

It localises to the secreted. The protein resides in the cytoplasm. Its function is as follows. Inhibits papain and cathepsin L but with affinities lower than other cystatins. May play a role in immune regulation through inhibition of a unique target in the hematopoietic system. This chain is Cystatin-F (CST7), found in Homo sapiens (Human).